Consider the following 1173-residue polypeptide: Inner capsid protein VP3 (1173 aa).

Residues 1 to 53 (MSNLPKPASHFEPEKNVDDKGNVTGSAPPVSKDTPTQQASVSLPNQEEPTQQT) form a disordered region. Residues 9-21 (SHFEPEKNVDDKG) show a composition bias toward basic and acidic residues. The segment covering 33 to 53 (DTPTQQASVSLPNQEEPTQQT) has biased composition (polar residues).

This sequence belongs to the turreted BTV-fold inner capsid family. Homodecamer; each decamer is made up of two conformers of VP2, called VP2A and VP2B. 12 homodecamers assemble to form an icosahedral capsid.

Its subcellular location is the virion. In terms of biological role, inner capsid protein that self-assembles to form an icosahedral capsid with a T=2 symmetry, which consists of 120 copies of VP2, with channels at each of its five-fold vertices. This capsid constitutes the innermost concentric layer of the viral mature particle. The protein is Inner capsid protein VP3 of Rice ragged stunt virus (isolate Thailand) (RRSV).